Reading from the N-terminus, the 194-residue chain is [Ribosomal protein uS5]-alanine N-acetyltransferase (194 aa).

The N-acetyltransferase domain occupies 18-188; it reads LVVRLVHDRD…DHVLTALTTP (171 aa).

This sequence belongs to the acetyltransferase family. RimJ subfamily.

Its subcellular location is the cytoplasm. It carries out the reaction N-terminal L-alanyl-[ribosomal protein uS5] + acetyl-CoA = N-terminal N(alpha)-acetyl-L-alanyl-[ribosomal protein uS5] + CoA + H(+). Functionally, acetylates the N-terminal alanine of ribosomal protein uS5. In Shigella flexneri, this protein is [Ribosomal protein uS5]-alanine N-acetyltransferase (rimJ).